Consider the following 545-residue polypeptide: CTP synthase (545 aa).

Residues 1–266 (MATNYIFVTG…DTFVCDRFRL (266 aa)) form an amidoligase domain region. Ser14 is a CTP binding site. Ser14 is a binding site for UTP. ATP contacts are provided by residues 15–20 (SLGKGI) and Asp72. 2 residues coordinate Mg(2+): Asp72 and Glu140. CTP-binding positions include 147-149 (DIE), 187-192 (KTKPTQ), and Lys223. UTP is bound by residues 187–192 (KTKPTQ) and Lys223. 239–241 (KDV) is an ATP binding site. In terms of domain architecture, Glutamine amidotransferase type-1 spans 291–542 (TIGMVGKYVE…VAAAKAYQDS (252 aa)). Gly352 provides a ligand contact to L-glutamine. Residue Cys379 is the Nucleophile; for glutamine hydrolysis of the active site. L-glutamine contacts are provided by residues 380–383 (LGMQ), Glu403, and Arg470. Active-site residues include His515 and Glu517.

It belongs to the CTP synthase family. Homotetramer.

It catalyses the reaction UTP + L-glutamine + ATP + H2O = CTP + L-glutamate + ADP + phosphate + 2 H(+). It carries out the reaction L-glutamine + H2O = L-glutamate + NH4(+). The enzyme catalyses UTP + NH4(+) + ATP = CTP + ADP + phosphate + 2 H(+). It participates in pyrimidine metabolism; CTP biosynthesis via de novo pathway; CTP from UDP: step 2/2. Its activity is regulated as follows. Allosterically activated by GTP, when glutamine is the substrate; GTP has no effect on the reaction when ammonia is the substrate. The allosteric effector GTP functions by stabilizing the protein conformation that binds the tetrahedral intermediate(s) formed during glutamine hydrolysis. Inhibited by the product CTP, via allosteric rather than competitive inhibition. Its function is as follows. Catalyzes the ATP-dependent amination of UTP to CTP with either L-glutamine or ammonia as the source of nitrogen. Regulates intracellular CTP levels through interactions with the four ribonucleotide triphosphates. This is CTP synthase from Actinobacillus pleuropneumoniae serotype 5b (strain L20).